Consider the following 283-residue polypeptide: Phytanoyl-CoA dioxygenase (283 aa).

Residues Lys-99, Met-138, 153–155, and Trp-170 contribute to the 2-oxoglutarate site; that span reads HQD. The Fe cation site is built by His-153 and Asp-155. Residue His-238 participates in Fe cation binding. Residues Ser-240 and Arg-249 each contribute to the 2-oxoglutarate site.

This sequence belongs to the PhyH family. Requires Fe cation as cofactor. L-ascorbate serves as cofactor.

The catalysed reaction is phytanoyl-CoA + 2-oxoglutarate + O2 = 2-hydroxyphytanoyl-CoA + succinate + CO2. It participates in lipid metabolism; fatty acid metabolism. Converts phytanoyl-CoA to 2-hydroxyphytanoyl-CoA. This is Phytanoyl-CoA dioxygenase from Arabidopsis thaliana (Mouse-ear cress).